A 227-amino-acid chain; its full sequence is Guanylate kinase (227 aa).

Positions 21-199 (GNLFMVVAPS…ALAELECIVA (179 aa)) constitute a Guanylate kinase-like domain. 28–35 (APSGAGKS) contacts ATP.

It belongs to the guanylate kinase family.

It is found in the cytoplasm. The catalysed reaction is GMP + ATP = GDP + ADP. Essential for recycling GMP and indirectly, cGMP. This chain is Guanylate kinase, found in Burkholderia lata (strain ATCC 17760 / DSM 23089 / LMG 22485 / NCIMB 9086 / R18194 / 383).